Here is a 208-residue protein sequence, read N- to C-terminus: Exosome complex component CSL4 homolog (208 aa).

In terms of assembly, component of the RNA exosome complex. Ubiquitously expressed.

It is found in the nucleus. Its subcellular location is the nucleolus. The protein resides in the nucleoplasm. Non-catalytic component of the RNA exosome complex which has 3'-&gt;5' exoribonuclease activity and participates in a multitude of cellular RNA processing and degradation events. Involved in regulation of antisense ribosomal siRNA production. Involved in response to cold-warm shock. In Caenorhabditis elegans, this protein is Exosome complex component CSL4 homolog.